We begin with the raw amino-acid sequence, 61 residues long: LKCHNKVVPFLSKTCPEGKNLCYKMTLKKVPKIPIKRGCTDACPKSSLLVNVMCCKTDKCN.

4 disulfides stabilise this stretch: C3–C22, C15–C39, C43–C54, and C55–C60.

Belongs to the three-finger toxin family. Short-chain subfamily. Type IB cytotoxin sub-subfamily. Expressed by the venom gland.

It localises to the secreted. Functionally, this protein lyses red blood cells, has cytotoxic activity and induces hypotension, but is not neurotoxic. In addition, it induces direct paralysis of the muscle fiber. The sequence is that of Cytotoxin 2 from Hemachatus haemachatus (Rinkhals).